The primary structure comprises 70 residues: Large ribosomal subunit protein uL29 (70 aa).

It belongs to the universal ribosomal protein uL29 family.

The chain is Large ribosomal subunit protein uL29 from Prochlorococcus marinus (strain MIT 9303).